The following is a 375-amino-acid chain: Putative monooxygenase Rv1533 (375 aa).

Residues Gln190, Gly195, Gly224, and 243 to 246 contribute to the FMN site; that span reads WCGS.

This sequence belongs to the nitronate monooxygenase family. Requires FMN as cofactor.

This is Putative monooxygenase Rv1533 from Mycobacterium tuberculosis (strain ATCC 25618 / H37Rv).